The chain runs to 495 residues: FK506-binding protein 4 (495 aa).

3 disordered regions span residues 115–198 (GSDD…ADLE), 243–312 (MDDD…NKRA), and 333–385 (KQQK…KPAT). Acidic residues-rich tracts occupy residues 116-126 (SDDEEDSDEEA), 152-161 (AQEESDEEME), 178-196 (ESDD…EGAD), and 243-283 (MDDD…LDGL). The span at 373 to 382 (EKPKQAKDSK) shows a compositional bias: basic and acidic residues. One can recognise a PPIase FKBP-type domain in the interval 409–495 (GDTVGVRYIG…IFDVKLLEIK (87 aa)).

This sequence belongs to the FKBP-type PPIase family. FKBP3/4 subfamily. In terms of assembly, binds to histones H3 and H4.

Its subcellular location is the nucleus. The catalysed reaction is [protein]-peptidylproline (omega=180) = [protein]-peptidylproline (omega=0). Its activity is regulated as follows. Inhibited by both FK506 and rapamycin. PPIase that acts as a histone chaperone. Histone proline isomerase that increases the rate of cis-trans isomerization at prolines on the histone H3 N-terminal tail. Proline isomerization influences H3 methylation thereby regulating gene expression. This Gibberella zeae (strain ATCC MYA-4620 / CBS 123657 / FGSC 9075 / NRRL 31084 / PH-1) (Wheat head blight fungus) protein is FK506-binding protein 4 (FPR4).